The following is a 389-amino-acid chain: Succinate--CoA ligase [ADP-forming] subunit beta (389 aa).

An ATP-grasp domain is found at 9-246 (KEILRRHNAN…ITEEDPYEVK (238 aa)). ATP contacts are provided by residues lysine 48, 55–57 (GRG), glutamate 101, leucine 104, and glutamate 109. Residues asparagine 201 and aspartate 215 each coordinate Mg(2+). Substrate-binding positions include asparagine 266 and 323-325 (GIV).

The protein belongs to the succinate/malate CoA ligase beta subunit family. In terms of assembly, heterotetramer of two alpha and two beta subunits. Mg(2+) is required as a cofactor.

It carries out the reaction succinate + ATP + CoA = succinyl-CoA + ADP + phosphate. It catalyses the reaction GTP + succinate + CoA = succinyl-CoA + GDP + phosphate. The protein operates within carbohydrate metabolism; tricarboxylic acid cycle; succinate from succinyl-CoA (ligase route): step 1/1. Its function is as follows. Succinyl-CoA synthetase functions in the citric acid cycle (TCA), coupling the hydrolysis of succinyl-CoA to the synthesis of either ATP or GTP and thus represents the only step of substrate-level phosphorylation in the TCA. The beta subunit provides nucleotide specificity of the enzyme and binds the substrate succinate, while the binding sites for coenzyme A and phosphate are found in the alpha subunit. The chain is Succinate--CoA ligase [ADP-forming] subunit beta from Leptospira biflexa serovar Patoc (strain Patoc 1 / Ames).